Consider the following 304-residue polypeptide: Recombination-associated protein RdgC (304 aa).

It belongs to the RdgC family.

It localises to the cytoplasm. The protein resides in the nucleoid. Functionally, may be involved in recombination. The protein is Recombination-associated protein RdgC of Dechloromonas aromatica (strain RCB).